The primary structure comprises 195 residues: Peptidyl-tRNA hydrolase (195 aa).

Y17 contributes to the tRNA binding site. Residue H22 is the Proton acceptor of the active site. TRNA is bound by residues F68, N70, and N116.

It belongs to the PTH family. In terms of assembly, monomer.

It localises to the cytoplasm. It catalyses the reaction an N-acyl-L-alpha-aminoacyl-tRNA + H2O = an N-acyl-L-amino acid + a tRNA + H(+). Its function is as follows. Hydrolyzes ribosome-free peptidyl-tRNAs (with 1 or more amino acids incorporated), which drop off the ribosome during protein synthesis, or as a result of ribosome stalling. In terms of biological role, catalyzes the release of premature peptidyl moieties from peptidyl-tRNA molecules trapped in stalled 50S ribosomal subunits, and thus maintains levels of free tRNAs and 50S ribosomes. This chain is Peptidyl-tRNA hydrolase, found in Pectobacterium atrosepticum (strain SCRI 1043 / ATCC BAA-672) (Erwinia carotovora subsp. atroseptica).